A 567-amino-acid chain; its full sequence is Urease subunit alpha (567 aa).

Residues 129-567 enclose the Urease domain; that stretch reads GGIDSHIHFI…LPMAQRYFLF (439 aa). Positions 134, 136, and 217 each coordinate Ni(2+). At lysine 217 the chain carries N6-carboxylysine. Histidine 219 contacts substrate. Histidine 246 and histidine 272 together coordinate Ni(2+). The Proton donor role is filled by histidine 320. Position 360 (aspartate 360) interacts with Ni(2+).

This sequence belongs to the metallo-dependent hydrolases superfamily. Urease alpha subunit family. In terms of assembly, heterotrimer of UreA (gamma), UreB (beta) and UreC (alpha) subunits. Three heterotrimers associate to form the active enzyme. Ni cation serves as cofactor. Carboxylation allows a single lysine to coordinate two nickel ions.

It localises to the cytoplasm. It catalyses the reaction urea + 2 H2O + H(+) = hydrogencarbonate + 2 NH4(+). It participates in nitrogen metabolism; urea degradation; CO(2) and NH(3) from urea (urease route): step 1/1. This chain is Urease subunit alpha, found in Tolumonas auensis (strain DSM 9187 / NBRC 110442 / TA 4).